Consider the following 301-residue polypeptide: Bifunctional protein FolD (301 aa).

Residues 164-166, Ser-191, and Ile-232 each bind NADP(+); that span reads GRS.

It belongs to the tetrahydrofolate dehydrogenase/cyclohydrolase family. In terms of assembly, homodimer.

It catalyses the reaction (6R)-5,10-methylene-5,6,7,8-tetrahydrofolate + NADP(+) = (6R)-5,10-methenyltetrahydrofolate + NADPH. It carries out the reaction (6R)-5,10-methenyltetrahydrofolate + H2O = (6R)-10-formyltetrahydrofolate + H(+). It participates in one-carbon metabolism; tetrahydrofolate interconversion. In terms of biological role, catalyzes the oxidation of 5,10-methylenetetrahydrofolate to 5,10-methenyltetrahydrofolate and then the hydrolysis of 5,10-methenyltetrahydrofolate to 10-formyltetrahydrofolate. The sequence is that of Bifunctional protein FolD from Borrelia garinii subsp. bavariensis (strain ATCC BAA-2496 / DSM 23469 / PBi) (Borreliella bavariensis).